The chain runs to 228 residues: NAD(P)H-hydrate epimerase (228 aa).

The region spanning 9–209 is the YjeF N-terminal domain; it reads VRAVERLAHR…LLGLTPAFLA (201 aa). Position 53 to 57 (53 to 57) interacts with (6S)-NADPHX; the sequence is NNGGD. Residues N54 and D115 each coordinate K(+). (6S)-NADPHX contacts are provided by residues 119 to 125 and D148; that span reads GIGLARP. S151 contacts K(+).

It belongs to the NnrE/AIBP family. The cofactor is K(+).

The enzyme catalyses (6R)-NADHX = (6S)-NADHX. It carries out the reaction (6R)-NADPHX = (6S)-NADPHX. Its function is as follows. Catalyzes the epimerization of the S- and R-forms of NAD(P)HX, a damaged form of NAD(P)H that is a result of enzymatic or heat-dependent hydration. This is a prerequisite for the S-specific NAD(P)H-hydrate dehydratase to allow the repair of both epimers of NAD(P)HX. The protein is NAD(P)H-hydrate epimerase of Bordetella pertussis (strain CS).